The chain runs to 345 residues: Protease HtpX homolog (345 aa).

Transmembrane regions (helical) follow at residues 6–26 and 27–47; these read TAML…LVGG and SNGM…SYWN. His130 serves as a coordination point for Zn(2+). Residue Glu131 is part of the active site. His134 lines the Zn(2+) pocket. The next 2 helical transmembrane spans lie at 145 to 165 and 179 to 199; these read LTAT…FMGG and IGGL…QMAI. Glu204 provides a ligand contact to Zn(2+).

This sequence belongs to the peptidase M48B family. Zn(2+) is required as a cofactor.

The protein resides in the cell inner membrane. This chain is Protease HtpX homolog, found in Bartonella henselae (strain ATCC 49882 / DSM 28221 / CCUG 30454 / Houston 1) (Rochalimaea henselae).